A 334-amino-acid chain; its full sequence is Ketol-acid reductoisomerase (NADP(+)) (334 aa).

The KARI N-terminal Rossmann domain occupies 2–182 (PKMYYEKDTD…GGARAGVLET (181 aa)). Residues 25–28 (YGSQ), serine 51, serine 53, and 83–86 (DEKQ) contribute to the NADP(+) site. Residue histidine 108 is part of the active site. Glycine 134 lines the NADP(+) pocket. Residues 183–328 (TFKDETETDL…KELRGMMSWI (146 aa)) enclose the KARI C-terminal knotted domain. Residues aspartate 191, glutamate 195, glutamate 227, and glutamate 231 each coordinate Mg(2+). A substrate-binding site is contributed by serine 252.

It belongs to the ketol-acid reductoisomerase family. Requires Mg(2+) as cofactor.

The enzyme catalyses (2R)-2,3-dihydroxy-3-methylbutanoate + NADP(+) = (2S)-2-acetolactate + NADPH + H(+). It catalyses the reaction (2R,3R)-2,3-dihydroxy-3-methylpentanoate + NADP(+) = (S)-2-ethyl-2-hydroxy-3-oxobutanoate + NADPH + H(+). Its pathway is amino-acid biosynthesis; L-isoleucine biosynthesis; L-isoleucine from 2-oxobutanoate: step 2/4. It participates in amino-acid biosynthesis; L-valine biosynthesis; L-valine from pyruvate: step 2/4. In terms of biological role, involved in the biosynthesis of branched-chain amino acids (BCAA). Catalyzes an alkyl-migration followed by a ketol-acid reduction of (S)-2-acetolactate (S2AL) to yield (R)-2,3-dihydroxy-isovalerate. In the isomerase reaction, S2AL is rearranged via a Mg-dependent methyl migration to produce 3-hydroxy-3-methyl-2-ketobutyrate (HMKB). In the reductase reaction, this 2-ketoacid undergoes a metal-dependent reduction by NADPH to yield (R)-2,3-dihydroxy-isovalerate. This is Ketol-acid reductoisomerase (NADP(+)) from Clostridium beijerinckii (strain ATCC 51743 / NCIMB 8052) (Clostridium acetobutylicum).